Consider the following 523-residue polypeptide: Factor arrest protein 8 (523 aa).

A coiled-coil region spans residues 26 to 76 (TKNERDRITWELERSEMKARIAELEGENRDLKHQLNQIQSKAVSPEGEKEE). Residues 61 to 80 (NQIQSKAVSPEGEKEEKHVP) form a disordered region. The span at 71-80 (EGEKEEKHVP) shows a compositional bias: basic and acidic residues. The residue at position 115 (serine 115) is a Phosphoserine. At threonine 132 the chain carries Phosphothreonine. Residues 150–171 (ALLDTKPNPKQGPSESPSPTKV) form a disordered region. Positions 160–171 (QGPSESPSPTKV) are enriched in polar residues.

Component of a complex at least composed of FAR3, FAR7, FAR8, FAR10, FAR11 and VPS64.

The protein resides in the cytoplasm. Its subcellular location is the endoplasmic reticulum. Functionally, participates in the control of the reentry into the cell cycle following pheromone treatment. This is Factor arrest protein 8 (FAR8) from Saccharomyces cerevisiae (strain ATCC 204508 / S288c) (Baker's yeast).